The sequence spans 350 residues: Biotin synthase (350 aa).

Residues 41–268 (NEVQISRLLS…KSRVRLSAGR (228 aa)) enclose the Radical SAM core domain. Positions 56, 60, and 63 each coordinate [4Fe-4S] cluster. 4 residues coordinate [2Fe-2S] cluster: Cys-100, Cys-131, Cys-191, and Arg-263.

It belongs to the radical SAM superfamily. Biotin synthase family. In terms of assembly, homodimer. Requires [4Fe-4S] cluster as cofactor. [2Fe-2S] cluster serves as cofactor.

The enzyme catalyses (4R,5S)-dethiobiotin + (sulfur carrier)-SH + 2 reduced [2Fe-2S]-[ferredoxin] + 2 S-adenosyl-L-methionine = (sulfur carrier)-H + biotin + 2 5'-deoxyadenosine + 2 L-methionine + 2 oxidized [2Fe-2S]-[ferredoxin]. It participates in cofactor biosynthesis; biotin biosynthesis; biotin from 7,8-diaminononanoate: step 2/2. In terms of biological role, catalyzes the conversion of dethiobiotin (DTB) to biotin by the insertion of a sulfur atom into dethiobiotin via a radical-based mechanism. The polypeptide is Biotin synthase (Shewanella sp. (strain ANA-3)).